Here is a 701-residue protein sequence, read N- to C-terminus: DC-STAMP domain-containing protein 2 (701 aa).

The next 4 helical transmembrane spans lie at T15 to G35, P40 to F60, L82 to Q102, and F215 to L235. 2 N-linked (GlcNAc...) asparagine glycosylation sites follow: N272 and N284. 2 helical membrane passes run A310–L330 and L404–A424. N-linked (GlcNAc...) asparagine glycosylation occurs at N468. The helical transmembrane segment at Y488–V508 threads the bilayer. The disordered stretch occupies residues L673 to Q701. Residues S685 to Q701 show a composition bias toward basic and acidic residues.

As to quaternary structure, interacts with DCST1. Expressed in testis.

Its subcellular location is the cytoplasmic vesicle. It is found in the secretory vesicle. The protein localises to the acrosome membrane. Its function is as follows. Essential sperm cell-surface protein required for sperm-egg fusion and fertilization. This is DC-STAMP domain-containing protein 2 from Mus musculus (Mouse).